A 304-amino-acid polypeptide reads, in one-letter code: Putative dihydroorotate dehydrogenase A (fumarate) (304 aa).

FMN contacts are provided by residues serine 22 and 46–47 (KG). Substrate contacts are provided by residues lysine 46 and 70 to 74 (NSVGL). 2 residues coordinate FMN: asparagine 100 and asparagine 128. Asparagine 128 serves as a coordination point for substrate. Cysteine 131 functions as the Nucleophile in the catalytic mechanism. 2 residues coordinate FMN: lysine 166 and valine 192. Position 193–194 (193–194 (NT)) interacts with substrate. FMN is bound by residues glycine 218, 244–245 (GG), and 266–267 (GT).

Belongs to the dihydroorotate dehydrogenase family. Type 1 subfamily. In terms of assembly, homodimer. FMN is required as a cofactor.

It localises to the cytoplasm. The catalysed reaction is (S)-dihydroorotate + fumarate = orotate + succinate. Its pathway is pyrimidine metabolism; UMP biosynthesis via de novo pathway. In terms of biological role, catalyzes the conversion of dihydroorotate to orotate with fumarate as the electron acceptor. The polypeptide is Putative dihydroorotate dehydrogenase A (fumarate) (pyrD) (Solibacter usitatus (strain Ellin6076)).